Reading from the N-terminus, the 57-residue chain is Small ribosomal subunit protein bS21 (57 aa).

Belongs to the bacterial ribosomal protein bS21 family.

The protein is Small ribosomal subunit protein bS21 of Bacillus cytotoxicus (strain DSM 22905 / CIP 110041 / 391-98 / NVH 391-98).